The primary structure comprises 404 residues: Phosphoglycerate kinase (404 aa).

Residues 26 to 28 (DFN), arginine 41, 64 to 67 (HLGR), arginine 124, and arginine 161 each bind substrate. ATP is bound by residues lysine 212, glycine 301, glutamate 332, and 359–362 (GGDS).

Belongs to the phosphoglycerate kinase family. In terms of assembly, monomer.

It localises to the cytoplasm. It catalyses the reaction (2R)-3-phosphoglycerate + ATP = (2R)-3-phospho-glyceroyl phosphate + ADP. It participates in carbohydrate degradation; glycolysis; pyruvate from D-glyceraldehyde 3-phosphate: step 2/5. This is Phosphoglycerate kinase from Mesomycoplasma hyopneumoniae (strain 232) (Mycoplasma hyopneumoniae).